Reading from the N-terminus, the 216-residue chain is Cytidylate kinase (216 aa).

7–15 (GPSGTGKST) is an ATP binding site.

This sequence belongs to the cytidylate kinase family. Type 1 subfamily.

The protein localises to the cytoplasm. It catalyses the reaction CMP + ATP = CDP + ADP. The enzyme catalyses dCMP + ATP = dCDP + ADP. This Chlamydia pneumoniae (Chlamydophila pneumoniae) protein is Cytidylate kinase.